The primary structure comprises 149 residues: UPF0178 protein Psyc_0274 (149 aa).

This sequence belongs to the UPF0178 family.

The chain is UPF0178 protein Psyc_0274 from Psychrobacter arcticus (strain DSM 17307 / VKM B-2377 / 273-4).